Consider the following 206-residue polypeptide: Proteasome subunit beta 2 (206 aa).

The propeptide at 1–7 is removed in mature form; by autocatalysis; the sequence is MREAVSK. Thr-8 acts as the Nucleophile in catalysis.

Belongs to the peptidase T1B family. The 20S proteasome core is composed of 14 alpha and 14 beta subunits that assemble into four stacked heptameric rings, resulting in a barrel-shaped structure. The two inner rings, each composed of seven catalytic beta subunits, are sandwiched by two outer rings, each composed of seven alpha subunits. The catalytic chamber with the active sites is on the inside of the barrel. Has a gated structure, the ends of the cylinder being occluded by the N-termini of the alpha-subunits. Is capped at one or both ends by the proteasome regulatory ATPase, PAN.

It localises to the cytoplasm. The catalysed reaction is Cleavage of peptide bonds with very broad specificity.. Its activity is regulated as follows. The formation of the proteasomal ATPase PAN-20S proteasome complex, via the docking of the C-termini of PAN into the intersubunit pockets in the alpha-rings, triggers opening of the gate for substrate entry. Interconversion between the open-gate and close-gate conformations leads to a dynamic regulation of the 20S proteasome proteolysis activity. Functionally, component of the proteasome core, a large protease complex with broad specificity involved in protein degradation. This is Proteasome subunit beta 2 from Desulfurococcus amylolyticus (strain DSM 18924 / JCM 16383 / VKM B-2413 / 1221n) (Desulfurococcus kamchatkensis).